The chain runs to 551 residues: Putative transport protein CGSHiGG_02670 (551 aa).

5 helical membrane-spanning segments follow: residues 4–24, 28–48, 65–85, 95–115, and 157–177; these read IAITISLLALVAVIGLWIGHW, GVGLGIGGVLFGGIIVAHFTN, FGLILFVYTIGIQVGPGFFSS, AFAILIIVLGSIAVVLVHKIA, and VSYAMAYPFGICGILLAMWLI. 2 RCK C-terminal domains span residues 191 to 275 and 277 to 360; these read RFNA…IIGH and VDAP…VIGN. Transmembrane regions (helical) follow at residues 370-390, 402-424, 438-458, 463-483, 492-512, and 529-549; these read MLPVFIGIGLGVLVGSIPFYI, AGGPLVVALILARIGTIGKLYWF, IVLFLAVVGLKSGGSFFDTLV, LEWMGYGIFITFVPLIIVGTI, YLTICGLLAGSMTDPPALAFA, and VYPLVMFLRIMSPQLLAVLLW.

It belongs to the AAE transporter (TC 2.A.81) family. YidE subfamily.

The protein localises to the cell membrane. The chain is Putative transport protein CGSHiGG_02670 from Haemophilus influenzae (strain PittGG).